A 434-amino-acid polypeptide reads, in one-letter code: [Pyruvate dehydrogenase (acetyl-transferring)] kinase isozyme 1, mitochondrial (434 aa).

A mitochondrion-targeting transit peptide spans 1 to 26; that stretch reads MRLARLLRGGTSVRPLCAVPCASRSL. Tyrosine 136 carries the phosphotyrosine; by FGFR1 modification. The 231-residue stretch at 161 to 391 folds into the Histidine kinase domain; it reads TEYKESFGVD…DAVIYIKALS (231 aa). Tyrosine 241 is subject to Phosphotyrosine; by FGFR1, ABL1, FLT3 and JAK2. Residue tyrosine 242 is modified to Phosphotyrosine; by FGFR1. ATP-binding positions include 277–284, aspartate 316, 335–336, and 352–357; these read ELFKNAMR, ST, and GFGYGL. Threonine 336 is subject to Phosphothreonine. Lysine 403 is modified (N6-succinyllysine).

It belongs to the PDK/BCKDK protein kinase family. Homodimer, and heterodimer with PDK2. Interacts with the pyruvate dehydrogenase complex subunit DLAT, and is part of the multimeric pyruvate dehydrogenase complex that contains multiple copies of pyruvate dehydrogenase (E1), dihydrolipoamide acetyltransferase (DLAT, E2) and lipoamide dehydrogenase (DLD, E3). Interacts with phosphoglycerate kinase PGK1; the interaction is direct, occurs under hypoxic conditions and leads to PDK1-mediated inhibition of pyruvate dehydrogenase complex activity. Phosphorylated by constitutively activated ABL1, FGFR1, FLT3 and JAK2 (in vitro), and this may also occur in cancer cells that express constitutively activated ABL1, FGFR1, FLT3 and JAK2. Phosphorylation at Tyr-241 and Tyr-242 strongly increases kinase activity, while phosphorylation at Tyr-136 has a lesser effect. Phosphorylated under hypoxic conditions at Thr-336 by phosphoglycerate kinase PGK1 which has an activating effect.

It localises to the mitochondrion matrix. It carries out the reaction L-seryl-[pyruvate dehydrogenase E1 alpha subunit] + ATP = O-phospho-L-seryl-[pyruvate dehydrogenase E1 alpha subunit] + ADP + H(+). Kinase that plays a key role in regulation of glucose and fatty acid metabolism and homeostasis via phosphorylation of the pyruvate dehydrogenase subunits PDHA1 and PDHA2. This inhibits pyruvate dehydrogenase activity, and thereby regulates metabolite flux through the tricarboxylic acid cycle, down-regulates aerobic respiration and inhibits the formation of acetyl-coenzyme A from pyruvate. Plays an important role in cellular responses to hypoxia and is important for cell proliferation under hypoxia. The chain is [Pyruvate dehydrogenase (acetyl-transferring)] kinase isozyme 1, mitochondrial (Pdk1) from Mus musculus (Mouse).